Reading from the N-terminus, the 214-residue chain is Phosphatidylserine decarboxylase proenzyme (214 aa).

Catalysis depends on serine 182, which acts as the Schiff-base intermediate with substrate; via pyruvic acid. Serine 182 bears the Pyruvic acid (Ser); by autocatalysis mark.

It belongs to the phosphatidylserine decarboxylase family. PSD-A subfamily. In terms of assembly, heterodimer of a large membrane-associated beta subunit and a small pyruvoyl-containing alpha subunit. Requires pyruvate as cofactor. In terms of processing, is synthesized initially as an inactive proenzyme. Formation of the active enzyme involves a self-maturation process in which the active site pyruvoyl group is generated from an internal serine residue via an autocatalytic post-translational modification. Two non-identical subunits are generated from the proenzyme in this reaction, and the pyruvate is formed at the N-terminus of the alpha chain, which is derived from the carboxyl end of the proenzyme. The post-translation cleavage follows an unusual pathway, termed non-hydrolytic serinolysis, in which the side chain hydroxyl group of the serine supplies its oxygen atom to form the C-terminus of the beta chain, while the remainder of the serine residue undergoes an oxidative deamination to produce ammonia and the pyruvoyl prosthetic group on the alpha chain.

It is found in the cell membrane. The enzyme catalyses a 1,2-diacyl-sn-glycero-3-phospho-L-serine + H(+) = a 1,2-diacyl-sn-glycero-3-phosphoethanolamine + CO2. It functions in the pathway phospholipid metabolism; phosphatidylethanolamine biosynthesis; phosphatidylethanolamine from CDP-diacylglycerol: step 2/2. Its function is as follows. Catalyzes the formation of phosphatidylethanolamine (PtdEtn) from phosphatidylserine (PtdSer). In Burkholderia cenocepacia (strain ATCC BAA-245 / DSM 16553 / LMG 16656 / NCTC 13227 / J2315 / CF5610) (Burkholderia cepacia (strain J2315)), this protein is Phosphatidylserine decarboxylase proenzyme.